The primary structure comprises 81 residues: MDSITSAASVVAAGLAVGLAAIGPGIGQGTASGGAVEGIARQPEAEGKIRGTLLLSLAFMESLTIYGLVVALVLLFANPFA.

The next 2 helical transmembrane spans lie at 7–27 and 57–77; these read AASV…PGIG and LAFM…LLFA.

This sequence belongs to the ATPase C chain family. F-type ATPases have 2 components, F(1) - the catalytic core - and F(0) - the membrane proton channel. F(1) has five subunits: alpha(3), beta(3), gamma(1), delta(1), epsilon(1). F(0) has four main subunits: a(1), b(1), b'(1) and c(10-14). The alpha and beta chains form an alternating ring which encloses part of the gamma chain. F(1) is attached to F(0) by a central stalk formed by the gamma and epsilon chains, while a peripheral stalk is formed by the delta, b and b' chains.

It is found in the cellular thylakoid membrane. F(1)F(0) ATP synthase produces ATP from ADP in the presence of a proton or sodium gradient. F-type ATPases consist of two structural domains, F(1) containing the extramembraneous catalytic core and F(0) containing the membrane proton channel, linked together by a central stalk and a peripheral stalk. During catalysis, ATP synthesis in the catalytic domain of F(1) is coupled via a rotary mechanism of the central stalk subunits to proton translocation. Functionally, key component of the F(0) channel; it plays a direct role in translocation across the membrane. A homomeric c-ring of between 10-14 subunits forms the central stalk rotor element with the F(1) delta and epsilon subunits. In Synechococcus sp. (strain CC9902), this protein is ATP synthase subunit c.